We begin with the raw amino-acid sequence, 191 residues long: Peptidyl-tRNA hydrolase (191 aa).

Tyr-14 lines the tRNA pocket. His-19 functions as the Proton acceptor in the catalytic mechanism. Residues Phe-64, Asn-66, and Asn-112 each contribute to the tRNA site.

Belongs to the PTH family. Monomer.

It localises to the cytoplasm. The enzyme catalyses an N-acyl-L-alpha-aminoacyl-tRNA + H2O = an N-acyl-L-amino acid + a tRNA + H(+). In terms of biological role, hydrolyzes ribosome-free peptidyl-tRNAs (with 1 or more amino acids incorporated), which drop off the ribosome during protein synthesis, or as a result of ribosome stalling. Its function is as follows. Catalyzes the release of premature peptidyl moieties from peptidyl-tRNA molecules trapped in stalled 50S ribosomal subunits, and thus maintains levels of free tRNAs and 50S ribosomes. This chain is Peptidyl-tRNA hydrolase, found in Novosphingobium aromaticivorans (strain ATCC 700278 / DSM 12444 / CCUG 56034 / CIP 105152 / NBRC 16084 / F199).